The sequence spans 158 residues: HVA22-like protein f (158 aa).

A run of 3 helical transmembrane segments spans residues 2-22 (GFIIAIAKRFDALVGPGVMLL), 41-61 (QQWLTYWIIYSLITIFELSVW), and 63-83 (VLAWLPFWPYLKLLFCMWLVL).

Belongs to the DP1 family.

It localises to the membrane. This Arabidopsis thaliana (Mouse-ear cress) protein is HVA22-like protein f (HVA22F).